The chain runs to 145 residues: MHVLVINGPNLNRLGKRQPEVYGSTTLADVEAMVARRADALGVGVSFIQSNHEGELIDAVHNAADHGWPVIINPGGFTHTSVALRDALAEIADGAGFVEVHISNVHAREPFRAHSYLSPIALGVIAGLGVRGYELALEFLADRER.

Tyr22 (proton acceptor) is an active-site residue. Substrate contacts are provided by Asn73, His79, and Asp86. Residue His101 is the Proton donor of the active site. Substrate-binding positions include 102 to 103 and Arg112; that span reads IS.

The protein belongs to the type-II 3-dehydroquinase family. As to quaternary structure, homododecamer.

The catalysed reaction is 3-dehydroquinate = 3-dehydroshikimate + H2O. It participates in metabolic intermediate biosynthesis; chorismate biosynthesis; chorismate from D-erythrose 4-phosphate and phosphoenolpyruvate: step 3/7. Its function is as follows. Catalyzes a trans-dehydration via an enolate intermediate. This chain is 3-dehydroquinate dehydratase 2 (aroQ2), found in Corynebacterium efficiens (strain DSM 44549 / YS-314 / AJ 12310 / JCM 11189 / NBRC 100395).